The sequence spans 353 residues: Abasic site processing protein HMCES (353 aa).

Cys2 (nucleophile) is an active-site residue. Cys2 bears the Thiazolidine linkage to a ring-opened DNA abasic site mark. Glu127 is a catalytic residue. Glycyl lysine isopeptide (Lys-Gly) (interchain with G-Cter in SUMO2) cross-links involve residues Lys148 and Lys151. At Ser160 the chain carries Phosphoserine. Residues Lys274 and Lys275 each participate in a glycyl lysine isopeptide (Lys-Gly) (interchain with G-Cter in SUMO2) cross-link. The segment at 292–353 (TKSPKKEVPD…DEPMAKKPNS (62 aa)) is disordered. Ser294 is modified (phosphoserine). Residues 295–307 (PKKEVPDSPKKDA) are compositionally biased toward basic and acidic residues. Lys305 participates in a covalent cross-link: Glycyl lysine isopeptide (Lys-Gly) (interchain with G-Cter in SUMO2). At Ser321 the chain carries Phosphoserine. The PIP-box signature appears at 332 to 338 (SFLDRWL). A compositionally biased stretch (basic and acidic residues) spans 336–353 (RWLKQEKEDEPMAKKPNS). Residues Lys339 and Lys342 each participate in a glycyl lysine isopeptide (Lys-Gly) (interchain with G-Cter in SUMO2) cross-link.

Belongs to the SOS response-associated peptidase family. As to quaternary structure, interacts (via PIP-box motif) with PCNA. In terms of tissue distribution, expressed in embryonic stem cells.

Its subcellular location is the chromosome. With respect to regulation, formation and reversal of DNA-protein cross-link depends on DNA context. Catalyzes formation of the thiazolidine linkage in presence of abasic sites in single-stranded DNA. Mediates the reversal of the thiazolidine cross-link in presence of double stranded DNA. In terms of biological role, sensor of abasic sites in single-stranded DNA (ssDNA) required to preserve genome integrity by promoting error-free repair of abasic sites. Acts as an enzyme that recognizes and binds abasic sites in ssDNA at replication forks and chemically modifies the lesion by forming a covalent cross-link with DNA: forms a stable thiazolidine linkage between a ring-opened abasic site and the alpha-amino and sulfhydryl substituents of its N-terminal catalytic cysteine residue. Promotes error-free repair by protecting abasic sites from translesion synthesis (TLS) polymerases and endonucleases that are error-prone and would generate mutations and double-strand breaks. The HMCES DNA-protein cross-link is then either reversed or degraded. HMCES is able to catalyze the reversal of its thiazolidine cross-link and cycle between a cross-link and a non-cross-linked state depending on DNA context: mediates self-reversal of the thiazolidine cross-link in double stranded DNA, allowing APEX1 to initiate downstream repair of abasic sites. The HMCES DNA-protein cross-link can also be degraded by the SPRTN metalloprotease following unfolding by the BRIP1/FANCJ helicase. Has preference for ssDNA, but can also accommodate double-stranded DNA with 3' or 5' overhang (dsDNA), and dsDNA-ssDNA 3' junction. Plays a protective role during somatic hypermutation of immunoglobulin genes in B-cells: acts via its ability to form covalent cross-links with abasic sites, thereby limiting the accumulation of deletions in somatic hypermutation target regions. Also involved in class switch recombination (CSR) in B-cells independently of the formation of a DNA-protein cross-link: acts by binding and protecting ssDNA overhangs to promote DNA double-strand break repair through the microhomology-mediated alternative-end-joining (Alt-EJ) pathway. Acts as a protease: mediates autocatalytic processing of its N-terminal methionine in order to expose the catalytic cysteine. The sequence is that of Abasic site processing protein HMCES from Mus musculus (Mouse).